A 430-amino-acid polypeptide reads, in one-letter code: Ribosomal protein uS12 methylthiotransferase RimO (430 aa).

One can recognise an MTTase N-terminal domain in the interval 1–116 (MRVGIKVLGC…IANAIENGTD (116 aa)). The [4Fe-4S] cluster site is built by Cys10, Cys46, Cys79, Cys148, Cys152, and Cys155. The 232-residue stretch at 134–365 (LEERPYAYVK…LLQAEISNSR (232 aa)) folds into the Radical SAM core domain. The TRAM domain occupies 367–430 (DRFVGKKLKF…DEYDMWGSVI (64 aa)).

It belongs to the methylthiotransferase family. RimO subfamily. As to quaternary structure, monomer. Requires [4Fe-4S] cluster as cofactor.

It is found in the cytoplasm. The enzyme catalyses L-aspartate(89)-[ribosomal protein uS12]-hydrogen + (sulfur carrier)-SH + AH2 + 2 S-adenosyl-L-methionine = 3-methylsulfanyl-L-aspartate(89)-[ribosomal protein uS12]-hydrogen + (sulfur carrier)-H + 5'-deoxyadenosine + L-methionine + A + S-adenosyl-L-homocysteine + 2 H(+). Catalyzes the methylthiolation of an aspartic acid residue of ribosomal protein uS12. The polypeptide is Ribosomal protein uS12 methylthiotransferase RimO (Thermotoga maritima (strain ATCC 43589 / DSM 3109 / JCM 10099 / NBRC 100826 / MSB8)).